A 177-amino-acid chain; its full sequence is ATP synthase subunit b (177 aa).

A helical transmembrane segment spans residues 15–35; the sequence is GISGGTIIYQLLMFIILLALL.

It belongs to the ATPase B chain family. F-type ATPases have 2 components, F(1) - the catalytic core - and F(0) - the membrane proton channel. F(1) has five subunits: alpha(3), beta(3), gamma(1), delta(1), epsilon(1). F(0) has three main subunits: a(1), b(2) and c(10-14). The alpha and beta chains form an alternating ring which encloses part of the gamma chain. F(1) is attached to F(0) by a central stalk formed by the gamma and epsilon chains, while a peripheral stalk is formed by the delta and b chains.

The protein localises to the cell membrane. Functionally, f(1)F(0) ATP synthase produces ATP from ADP in the presence of a proton or sodium gradient. F-type ATPases consist of two structural domains, F(1) containing the extramembraneous catalytic core and F(0) containing the membrane proton channel, linked together by a central stalk and a peripheral stalk. During catalysis, ATP synthesis in the catalytic domain of F(1) is coupled via a rotary mechanism of the central stalk subunits to proton translocation. Component of the F(0) channel, it forms part of the peripheral stalk, linking F(1) to F(0). The sequence is that of ATP synthase subunit b from Geobacillus kaustophilus (strain HTA426).